Here is a 100-residue protein sequence, read N- to C-terminus: Urease subunit gamma (100 aa).

The protein belongs to the urease gamma subunit family. In terms of assembly, heterotrimer of UreA (gamma), UreB (beta) and UreC (alpha) subunits. Three heterotrimers associate to form the active enzyme.

Its subcellular location is the cytoplasm. The catalysed reaction is urea + 2 H2O + H(+) = hydrogencarbonate + 2 NH4(+). It functions in the pathway nitrogen metabolism; urea degradation; CO(2) and NH(3) from urea (urease route): step 1/1. This chain is Urease subunit gamma, found in Pseudomonas fluorescens (strain Pf0-1).